Consider the following 232-residue polypeptide: U-scoloptoxin(11)-Ssd2a (232 aa).

Residues Met1 to Gly21 form the signal peptide. Residues Lys22–Arg32 constitute a propeptide that is removed on maturation.

Post-translationally, contains 8 disulfide bonds. In terms of tissue distribution, expressed by the venom gland.

It is found in the secreted. This Scolopendra dehaani (Thai centipede) protein is U-scoloptoxin(11)-Ssd2a.